A 286-amino-acid polypeptide reads, in one-letter code: Release factor glutamine methyltransferase (286 aa).

S-adenosyl-L-methionine is bound by residues 120-124 (GTGSG), aspartate 143, tryptophan 172, and asparagine 187. 187–190 (NPPY) is a substrate binding site.

The protein belongs to the protein N5-glutamine methyltransferase family. PrmC subfamily.

It catalyses the reaction L-glutaminyl-[peptide chain release factor] + S-adenosyl-L-methionine = N(5)-methyl-L-glutaminyl-[peptide chain release factor] + S-adenosyl-L-homocysteine + H(+). Methylates the class 1 translation termination release factors RF1/PrfA and RF2/PrfB on the glutamine residue of the universally conserved GGQ motif. This Gloeobacter violaceus (strain ATCC 29082 / PCC 7421) protein is Release factor glutamine methyltransferase.